The chain runs to 464 residues: Putative protein TIC 214 C-terminal part (464 aa).

The protein belongs to the TIC214 family. Part of the Tic complex.

Its subcellular location is the plastid. It localises to the chloroplast. Its function is as follows. Involved in protein precursor import into chloroplasts. May be part of an intermediate translocation complex acting as a protein-conducting channel at the inner envelope. The protein is Putative protein TIC 214 C-terminal part of Marchantia polymorpha (Common liverwort).